The primary structure comprises 242 residues: 1-(5-phosphoribosyl)-5-[(5-phosphoribosylamino)methylideneamino] imidazole-4-carboxamide isomerase (242 aa).

The Proton acceptor role is filled by Asp8. Asp129 functions as the Proton donor in the catalytic mechanism.

This sequence belongs to the HisA/HisF family.

The protein localises to the cytoplasm. The enzyme catalyses 1-(5-phospho-beta-D-ribosyl)-5-[(5-phospho-beta-D-ribosylamino)methylideneamino]imidazole-4-carboxamide = 5-[(5-phospho-1-deoxy-D-ribulos-1-ylimino)methylamino]-1-(5-phospho-beta-D-ribosyl)imidazole-4-carboxamide. The protein operates within amino-acid biosynthesis; L-histidine biosynthesis; L-histidine from 5-phospho-alpha-D-ribose 1-diphosphate: step 4/9. This Dictyoglomus turgidum (strain DSM 6724 / Z-1310) protein is 1-(5-phosphoribosyl)-5-[(5-phosphoribosylamino)methylideneamino] imidazole-4-carboxamide isomerase.